We begin with the raw amino-acid sequence, 216 residues long: 3-isopropylmalate dehydratase small subunit (216 aa).

Belongs to the LeuD family. LeuD type 1 subfamily. As to quaternary structure, heterodimer of LeuC and LeuD.

The enzyme catalyses (2R,3S)-3-isopropylmalate = (2S)-2-isopropylmalate. Its pathway is amino-acid biosynthesis; L-leucine biosynthesis; L-leucine from 3-methyl-2-oxobutanoate: step 2/4. Its function is as follows. Catalyzes the isomerization between 2-isopropylmalate and 3-isopropylmalate, via the formation of 2-isopropylmaleate. This Acinetobacter baylyi (strain ATCC 33305 / BD413 / ADP1) protein is 3-isopropylmalate dehydratase small subunit.